Here is a 528-residue protein sequence, read N- to C-terminus: MSNLFTRRLALLADDAHRDLLNQGRRGIERETLRVDLQGKLALGPHPVALGSALTNPQITTDYSESLLEFITPAEHDVATALEELDRIHRFANAKLDHELLWSQSMPCTLPEEADIPIAWYGTSHIGMIKHVYRRGLALRYGKAMQCIAGLHYNYSLSEDLWRVIKQSEQSRLDDKSYQSESYISLIRNFQRYSWLLMYLFGASPALSTHFLRGREHELQTLSDDTLYLPYATSLRMSDLGYQNNAQAGLMPPYNDLESYMRSLSRAVRQAYPAYEAIGTRRNGEWIQLNTNLLQIENEYYATIRPKRVINSGERPVEALCARGVQYIEVRCMDIDPFEPLGISLPTSRFLDAFLLFCALDDSPLTDEANNRERTENFARTVKEGRRPGLLLQRDGAAVKLQDWGLELLERIQATADLLDAQRADSQHAQALAAQKEKLLDAGLTPSARVLAELQATDKSFEQFGLRQSIAHAEYFRARPLNAEENFYFETLAKTSIAEQEEMERTQSGDFDAFVEAYNQRTPQQLCD.

It belongs to the glutamate--cysteine ligase type 1 family. Type 1 subfamily.

It catalyses the reaction L-cysteine + L-glutamate + ATP = gamma-L-glutamyl-L-cysteine + ADP + phosphate + H(+). Its pathway is sulfur metabolism; glutathione biosynthesis; glutathione from L-cysteine and L-glutamate: step 1/2. This Janthinobacterium sp. (strain Marseille) (Minibacterium massiliensis) protein is Glutamate--cysteine ligase.